Consider the following 363-residue polypeptide: MAP kinase kinase skh1/pek1 (363 aa).

The region spanning 79-343 is the Protein kinase domain; the sequence is ILYMNSLGEG…PQKMLTHPWV (265 aa). Residues 85 to 93 and Lys108 each bind ATP; that span reads LGEGVSGSV. Asp206 functions as the Proton acceptor in the catalytic mechanism. Position 234 is a phosphoserine (Ser234). Phosphothreonine is present on Thr238.

The protein belongs to the protein kinase superfamily. STE Ser/Thr protein kinase family. MAP kinase kinase subfamily.

It catalyses the reaction L-seryl-[protein] + ATP = O-phospho-L-seryl-[protein] + ADP + H(+). The enzyme catalyses L-threonyl-[protein] + ATP = O-phospho-L-threonyl-[protein] + ADP + H(+). It carries out the reaction L-tyrosyl-[protein] + ATP = O-phospho-L-tyrosyl-[protein] + ADP + H(+). With respect to regulation, activated by mkh1. Involved in the mkh1 signal transduction pathway that plays a role in cell wall integrity. Activates spm1/pmk1 via phosphorylation. The chain is MAP kinase kinase skh1/pek1 (skh1) from Schizosaccharomyces pombe (strain 972 / ATCC 24843) (Fission yeast).